Here is a 369-residue protein sequence, read N- to C-terminus: Phosphoribosyl pyrophosphate synthase-associated protein 2 (369 aa).

M1 carries the post-translational modification N-acetylmethionine. A phosphoserine mark is found at S219, S227, and S233.

Belongs to the ribose-phosphate pyrophosphokinase family. In terms of assembly, binds to PRPS1 and PRPS2. Ubiquitous.

Seems to play a negative regulatory role in 5-phosphoribose 1-diphosphate synthesis. In Rattus norvegicus (Rat), this protein is Phosphoribosyl pyrophosphate synthase-associated protein 2 (Prpsap2).